The sequence spans 319 residues: MALPLELESLTEAISAGMGMGVDENALISTLGKSQKEHRKLFRKASKSFFVEDEERAFEKCHDHFVRHLKLEFSRFNTAVVMWAMHPWERDARLVKKALKKGEEAYNLIVEVSCTRSAEDLLGARKAYHSLFDQSMEEDIASHVHGPQRKLLVGLVSAYRYEGNKVKDDSAKSDAKILAEAVASSGEEAVEKDEVVRILTTRSKLHLQHLYKHFNEIKGSDLLGGVSKSSLLNEALICLLKPALYFSKILDASLNKDADKTTKKWLTRVFVTRADHSDEMNEIKEEYNNLYGETLAQRIQEKIKGNYRDFLLTLLSKSD.

2 Annexin repeats span residues 1 to 75 (MALP…EFSR) and 86 to 157 (HPWE…GLVS). Residues Gly19, Gly21, and Glu72 each coordinate Ca(2+). Thr115 carries the phosphothreonine modification. A phosphotyrosine mark is found at Tyr159 and Tyr211. Annexin repeat units follow at residues 169 to 240 (DSAK…ICLL) and 241 to 316 (KPAL…TLLS). Ser277 carries the post-translational modification Phosphoserine. Tyr287 is subject to Phosphotyrosine.

Belongs to the annexin (TC 1.A.31.1) family. As to expression, expressed mainly in roots and flowers. Lower in stems and leaves.

May be involved in osmotic stress and abscisic acid signaling in a calcium-dependent manner. This Arabidopsis thaliana (Mouse-ear cress) protein is Annexin D4 (ANN4).